A 385-amino-acid polypeptide reads, in one-letter code: MAALSGVRWLTRALVSAGNPGAWRGLSTSAAAHAASRSQAEDVRVEGSFPVTMLPGDGVGPELMHAVKEVFKAAAVPVEFQEHHLSEVQNMASEEKLEQVLSSMKENKVAIIGKIHTPMEYKGELASYDMRLRRKLDLFANVVHVKSLPGYMTRHNNLDLVIIREQTEGEYSSLEHESARGVIECLKIVTRAKSQRIAKFAFDYATKKGRSKVTAVHKANIMKLGDGLFLQCCEEVAELYPKIKFETMIIDNCCMQLVQNPYQFDVLVMPNLYGNIIDNLAAGLVGGAGVVPGESYSAEYAVFETGARHPFAQAVGRNIANPTAMLLSASNMLRHLNLEYHSNMIADAVKKVIKVGKVRTRDMGGYSTTTDFIKSVIGHLHPHGS.

Residues 1 to 34 constitute a mitochondrion transit peptide; that stretch reads MAALSGVRWLTRALVSAGNPGAWRGLSTSAAAHA. Residue lysine 199 is modified to N6-acetyllysine.

Belongs to the isocitrate and isopropylmalate dehydrogenases family. In terms of assembly, heterooligomer of subunits alpha (IDH3A), beta (IDH3B), and gamma (IDH3G) in the apparent ratio of 2:1:1. The heterodimer containing one IDH3A and one IDH3B subunit and the heterodimer containing one IDH3A and one IDH3G subunit assemble into a heterotetramer (which contains two subunits of IDH3A, one of IDH3B and one of IDH3G) and further into the heterooctamer.

The protein localises to the mitochondrion. Its activity is regulated as follows. The heterotetramer and the heterodimer composed of IDH3A and IDH3G subunits can be allosterically activated by citrate (CIT) or/and ADP, and the two activators can act independently or synergistically. The heterodimer composed of IDH3A and IDH3B subunits cannot be allosterically regulated and the allosteric regulation of the heterotetramer is through the IDH3G subunit and not the IDH3B subunit. The IDH3G subunit contains the allosteric site which consists of a CIT-binding site and an ADP-binding site, and the binding of CIT and ADP causes conformational changes at the allosteric site which are transmitted to the active site in the catalytic subunit (IDH3A) through a cascade of conformational changes at the heterodimer interface, leading to stabilization of the isocitrate-binding at the active site and thus activation of the enzyme. ATP can activate the heterotetramer and the heterodimer composed of IDH3A and IDH3G subunits at low concentrations but inhibits their activities at high concentrations, whereas ATP exhibits only inhibitory effect on the heterodimer composed of IDH3A and IDH3B subunits. Functionally, plays a structural role to facilitate the assembly and ensure the full activity of the enzyme catalyzing the decarboxylation of isocitrate (ICT) into alpha-ketoglutarate. The heterodimer composed of the alpha (IDH3A) and beta (IDH3B) subunits and the heterodimer composed of the alpha (IDH3A) and gamma (IDH3G) subunits, have considerable basal activity but the full activity of the heterotetramer (containing two subunits of IDH3A, one of IDH3B and one of IDH3G) requires the assembly and cooperative function of both heterodimers. This Macaca fascicularis (Crab-eating macaque) protein is Isocitrate dehydrogenase [NAD] subunit beta, mitochondrial (IDH3B).